An 857-amino-acid polypeptide reads, in one-letter code: uncharacterized protein (857 aa).

Disordered stretches follow at residues Pro-316–Asn-339, Ala-484–Asn-561, Gly-619–Gln-777, and Glu-809–Lys-836. 3 stretches are compositionally biased toward basic and acidic residues: residues Pro-324–Asn-339, Lys-518–Glu-534, and Gln-630–Cys-640. A compositionally biased stretch (polar residues) spans Arg-683–Arg-700. Positions Ser-708–Ser-725 are enriched in low complexity. Residues Thr-726 to Ala-738 are compositionally biased toward polar residues. Residues Glu-809 to Ala-828 are compositionally biased toward basic and acidic residues.

This is an uncharacterized protein from Mus musculus (Mouse).